The sequence spans 238 residues: Ribonuclease PH (238 aa).

Phosphate is bound by residues arginine 86 and 124 to 126 (GTR).

Belongs to the RNase PH family. In terms of assembly, homohexameric ring arranged as a trimer of dimers.

It catalyses the reaction tRNA(n+1) + phosphate = tRNA(n) + a ribonucleoside 5'-diphosphate. Functionally, phosphorolytic 3'-5' exoribonuclease that plays an important role in tRNA 3'-end maturation. Removes nucleotide residues following the 3'-CCA terminus of tRNAs; can also add nucleotides to the ends of RNA molecules by using nucleoside diphosphates as substrates, but this may not be physiologically important. Probably plays a role in initiation of 16S rRNA degradation (leading to ribosome degradation) during starvation. The chain is Ribonuclease PH from Edwardsiella ictaluri (strain 93-146).